A 193-amino-acid chain; its full sequence is Thioredoxin reductase-like selenoprotein T1a (193 aa).

Positions 1–21 are cleaved as a signal peptide; sequence MRWLPFSALLLWALCLHSASA. Positions 44 to 47 form a cross-link, cysteinyl-selenocysteine (Cys-Sec); it reads CVSU. Sec47 is a non-standard amino acid (selenocysteine). A helical transmembrane segment spans residues 83-101; it reads IASFLSMFKLLLIGVIILG.

This sequence belongs to the SelWTH family. Selenoprotein T subfamily. May contain a selenide-sulfide bond between Cys-44 and Sec-47. This bond is speculated to serve as redox-active pair. As to expression, expressed in embryonic olfactory vesicles and the photoreceptor cell layer of the embryonic retina. Low level in embryonic epiphysis.

It localises to the endoplasmic reticulum membrane. It catalyses the reaction [thioredoxin]-dithiol + NADP(+) = [thioredoxin]-disulfide + NADPH + H(+). Functionally, selenoprotein with thioredoxin reductase-like oxidoreductase activity. This Danio rerio (Zebrafish) protein is Thioredoxin reductase-like selenoprotein T1a.